The primary structure comprises 182 residues: UPF0397 protein BCAH820_2657 (182 aa).

Transmembrane regions (helical) follow at residues 9 to 29, 40 to 60, 71 to 91, 114 to 134, and 142 to 162; these read VVAI…GFTI, AILT…IGLI, WGIW…MGFI, ITGL…DIIV, and IVIQ…VLGL.

The protein belongs to the UPF0397 family.

The protein localises to the cell membrane. In Bacillus cereus (strain AH820), this protein is UPF0397 protein BCAH820_2657.